Reading from the N-terminus, the 165-residue chain is Large ribosomal subunit protein uL15 (165 aa).

The tract at residues 1–44 (MSLNQLKAPRGANRAKKRVGRGQGSGLGKTAGRGGKGQKARSGN) is disordered. Positions 21–37 (RGQGSGLGKTAGRGGKG) are enriched in gly residues.

The protein belongs to the universal ribosomal protein uL15 family. Part of the 50S ribosomal subunit.

Its function is as follows. Binds to the 23S rRNA. This is Large ribosomal subunit protein uL15 from Anaeromyxobacter dehalogenans (strain 2CP-C).